We begin with the raw amino-acid sequence, 551 residues long: ATP synthase subunit alpha (551 aa).

Residue 174–181 coordinates ATP; the sequence is GDRQTGKT.

This sequence belongs to the ATPase alpha/beta chains family. As to quaternary structure, F-type ATPases have 2 components, CF(1) - the catalytic core - and CF(0) - the membrane proton channel. CF(1) has five subunits: alpha(3), beta(3), gamma(1), delta(1), epsilon(1). CF(0) has three main subunits: a(1), b(2) and c(9-12). The alpha and beta chains form an alternating ring which encloses part of the gamma chain. CF(1) is attached to CF(0) by a central stalk formed by the gamma and epsilon chains, while a peripheral stalk is formed by the delta and b chains.

Its subcellular location is the cell inner membrane. It catalyses the reaction ATP + H2O + 4 H(+)(in) = ADP + phosphate + 5 H(+)(out). Its function is as follows. Produces ATP from ADP in the presence of a proton gradient across the membrane. The alpha chain is a regulatory subunit. This is ATP synthase subunit alpha from Salinibacter ruber (strain DSM 13855 / M31).